The chain runs to 527 residues: MKSSTTQTLIFTVFLLLIPTSFAAPPKLKDSFTQCVTVFKPSVPIQNFTYTQQNPNFLTILNNYVRNLRYFNGTTRKPVAIVAAAHFTHIQATINCAKKLGLQLRIRSGGHDYDGMSYLSTVDFVVLDMFNLRAIEIDPKLDTAWVQSGATLGEIYYNVANKSNNLRGFPAGICPGLGAGGHFSGGGYGNMMRKYGLSIDNIIDAKIVDANARVLDRSSMGEDLFWALRGGGAASFCVVLAWKIKLVPVPEKVTVFNVETIGNRGVIPTDLAAKWQEIADKIDNDLFIRLTLSSSNKTVKASFMGMYLGNSEKLLEIMNAKFPELGLNKTECIEMKWIESVLFWLSIPPGTAPTSVMLNRIPQKQIYLKRKSDYVQKPISKPGLESIFKILSENENVSMAWNPYGGRMSEIPATETAFPHRAGNMFKIQYSSNWFVPGEEAASDCLSQTERVFEAMSPYVSKNPREAFLNYRDIDIGKNLNSTYEEGKVYGVKYFKNNFERLVQVKTRVDPDNIFRYEQSIPVHVSR.

Residues 1–23 form the signal peptide; that stretch reads MKSSTTQTLIFTVFLLLIPTSFA. A disulfide bond links Cys35 and Cys96. N-linked (GlcNAc...) asparagine glycans are attached at residues Asn47, Asn72, Asn161, Asn296, Asn328, Asn396, and Asn481. The region spanning 74-249 is the FAD-binding PCMH-type domain; the sequence is TTRKPVAIVA…LAWKIKLVPV (176 aa). The segment at residues 111-174 is a cross-link (6-(S-cysteinyl)-8alpha-(pros-histidyl)-FAD (His-Cys)); sequence HDYDGMSYLS…NLRGFPAGIC (64 aa).

This sequence belongs to the oxygen-dependent FAD-linked oxidoreductase family. FAD is required as a cofactor. The FAD cofactor is bound via a bicovalent 6-S-cysteinyl, 8alpha-N1-histidyl FAD linkage.

It is found in the secreted. It localises to the cell wall. The polypeptide is Berberine bridge enzyme-like 14 (Arabidopsis thaliana (Mouse-ear cress)).